Here is a 440-residue protein sequence, read N- to C-terminus: 3-phosphoshikimate 1-carboxyvinyltransferase (440 aa).

3-phosphoshikimate-binding residues include Lys19, Ser20, and Arg24. Lys19 is a phosphoenolpyruvate binding site. The phosphoenolpyruvate site is built by Gly92 and Arg121. Ser166, Gln168, Asp315, and Lys342 together coordinate 3-phosphoshikimate. Residue Gln168 participates in phosphoenolpyruvate binding. Asp315 functions as the Proton acceptor in the catalytic mechanism. Residues Arg346 and Arg399 each coordinate phosphoenolpyruvate.

The protein belongs to the EPSP synthase family. In terms of assembly, monomer.

The protein localises to the cytoplasm. The catalysed reaction is 3-phosphoshikimate + phosphoenolpyruvate = 5-O-(1-carboxyvinyl)-3-phosphoshikimate + phosphate. It participates in metabolic intermediate biosynthesis; chorismate biosynthesis; chorismate from D-erythrose 4-phosphate and phosphoenolpyruvate: step 6/7. Functionally, catalyzes the transfer of the enolpyruvyl moiety of phosphoenolpyruvate (PEP) to the 5-hydroxyl of shikimate-3-phosphate (S3P) to produce enolpyruvyl shikimate-3-phosphate and inorganic phosphate. The sequence is that of 3-phosphoshikimate 1-carboxyvinyltransferase from Leptospira interrogans serogroup Icterohaemorrhagiae serovar Lai (strain 56601).